A 208-amino-acid polypeptide reads, in one-letter code: MDAIFYPLPIGETGDNEKYLEDFQEEDFQEEDFQEEDFQEEDFQEEDEDEEDEEVNEYPSDLDDEYPDSDYYDERSDRHWSDDDSDRDLDDLYDEYENYYEEVQVKKQNLEVEIIDITPEIEILNQNEKEKFNQVEDKLTTLSKNLTCIICLTNQVQILTIPCGHLIMCNPCSLNLNNSVCTRGVNSNYEKCPKCRTPIYNKIIARLP.

Residues 1–87 (MDAIFYPLPI…RHWSDDDSDR (87 aa)) are disordered. Positions 22–71 (DFQEEDFQEEDFQEEDFQEEDFQEEDEDEEDEEVNEYPSDLDDEYPDSDY) are enriched in acidic residues. Positions 72 to 82 (YDERSDRHWSD) are enriched in basic and acidic residues. Residues 83–147 (DDSDRDLDDL…KLTTLSKNLT (65 aa)) are a coiled coil. An RING-type zinc finger spans residues 148-196 (CIICLTNQVQILTIPCGHLIMCNPCSLNLNNSVCTRGVNSNYEKCPKCR).

The protein is Putative RING finger protein 413R (EF2) of Acheta domesticus (House cricket).